Reading from the N-terminus, the 418-residue chain is Synaptotagmin-15 (418 aa).

Topologically, residues 1-4 are extracellular; sequence MAEQ. The helical; Signal-anchor for type III membrane protein transmembrane segment at 5-27 threads the bilayer; the sequence is LAFLIGGIIGGLLLLIGVSCCLW. The Cytoplasmic segment spans residues 28-418; sequence RRFCATFTYE…WHALCRPTEP (391 aa). C2 domains follow at residues 144–261 and 275–396; these read CLGR…HRII and EFGD…EHWG.

The protein belongs to the synaptotagmin family. In terms of assembly, homodimer. As to expression, isoform 1 and isoform 2 are expressed in heart, lung, skeletal muscle and testis; not detected in brain, liver and kidney. Isoform 1 is expressed in spleen.

The protein resides in the membrane. Functionally, may be involved in the trafficking and exocytosis of secretory vesicles in non-neuronal tissues. This Mus musculus (Mouse) protein is Synaptotagmin-15 (Syt15).